The sequence spans 410 residues: Arginine deiminase (410 aa).

The active-site Amidino-cysteine intermediate is cysteine 400.

This sequence belongs to the arginine deiminase family.

The protein resides in the cytoplasm. It catalyses the reaction L-arginine + H2O = L-citrulline + NH4(+). It participates in amino-acid degradation; L-arginine degradation via ADI pathway; carbamoyl phosphate from L-arginine: step 1/2. The protein is Arginine deiminase of Lactococcus lactis subsp. cremoris (strain MG1363).